The following is a 232-amino-acid chain: Large ribosomal subunit protein uL1 (232 aa).

This sequence belongs to the universal ribosomal protein uL1 family. In terms of assembly, part of the 50S ribosomal subunit.

In terms of biological role, binds directly to 23S rRNA. The L1 stalk is quite mobile in the ribosome, and is involved in E site tRNA release. Protein L1 is also a translational repressor protein, it controls the translation of the L11 operon by binding to its mRNA. The sequence is that of Large ribosomal subunit protein uL1 from Xanthomonas oryzae pv. oryzae (strain MAFF 311018).